Here is a 442-residue protein sequence, read N- to C-terminus: MPKEKTHINIVVIGHVDSGKSTTTGHLIYKCGGIDQRTIEKFEKESAEMGKGSFKYAWVLDNLKAERERGITIDISLWKFETSKYYFTIIDAPGHRDFIKNMITGTSQADVAILIVAAGTGEFEAGISKNGQTREHILLSYTLGVKQMIVGVNKMDAIQYKQERYEEIKKEISAFLKKTGYNPDKIPFVPISGFQGDNMIEPSTNMPWYKGPTLIGALDSVTPPERPVDKPLRLPLQDVYKISGIGTVPVGRVETGILKPGTIVQFAPSGVSSECKSIEMHHTALAQAIPGDNVGFNVRNLTVKDIKRGNVASDAKNQPAVGCEDFTAQVIVMNHPGQIRKGYTPVLDCHTSHIACKFEELLSKIDRRTGKSMEGGEPEYIKNGDSALVKIVPTKPLCVEEFAKFPPLGRFAVRDMKQTVAVGVVKAVTPRAANASAAGKKK.

The region spanning 5–228 (KTHINIVVIG…DSVTPPERPV (224 aa)) is the tr-type G domain. The tract at residues 14–21 (GHVDSGKS) is G1. 14 to 21 (GHVDSGKS) contacts GTP. Residues 70-74 (GITID) form a G2 region. A G3 region spans residues 91–94 (DAPG). GTP-binding positions include 91-95 (DAPGH) and 153-156 (NKMD). The G4 stretch occupies residues 153–156 (NKMD). Residues 192-194 (SGF) are G5.

The protein belongs to the TRAFAC class translation factor GTPase superfamily. Classic translation factor GTPase family. EF-Tu/EF-1A subfamily.

It is found in the cytoplasm. Functionally, this protein promotes the GTP-dependent binding of aminoacyl-tRNA to the A-site of ribosomes during protein biosynthesis. The chain is Elongation factor 1-alpha from Entamoeba histolytica (strain ATCC 30459 / HM-1:IMSS / ABRM).